The chain runs to 426 residues: Glutamate-1-semialdehyde 2,1-aminomutase (426 aa).

At Lys265 the chain carries N6-(pyridoxal phosphate)lysine.

This sequence belongs to the class-III pyridoxal-phosphate-dependent aminotransferase family. HemL subfamily. Homodimer. It depends on pyridoxal 5'-phosphate as a cofactor.

Its subcellular location is the cytoplasm. The catalysed reaction is (S)-4-amino-5-oxopentanoate = 5-aminolevulinate. It functions in the pathway porphyrin-containing compound metabolism; protoporphyrin-IX biosynthesis; 5-aminolevulinate from L-glutamyl-tRNA(Glu): step 2/2. The sequence is that of Glutamate-1-semialdehyde 2,1-aminomutase from Salmonella typhi.